The sequence spans 934 residues: Bifunctional uridylyltransferase/uridylyl-removing enzyme (934 aa).

The segment at 1–379 (MSAHDLKLEE…TFSRRKRKLS (379 aa)) is uridylyltransferase. The segment at 380–736 (DDGAFISENH…AKPHAFEAVT (357 aa)) is uridylyl-removing. The HD domain occupies 496-613 (VDEHLLRCIA…IDFADTVQTM (118 aa)). ACT domains are found at residues 737–818 (EITV…DMLA) and 848–931 (VIEV…RSPQ).

Belongs to the GlnD family. Mg(2+) is required as a cofactor.

It catalyses the reaction [protein-PII]-L-tyrosine + UTP = [protein-PII]-uridylyl-L-tyrosine + diphosphate. The enzyme catalyses [protein-PII]-uridylyl-L-tyrosine + H2O = [protein-PII]-L-tyrosine + UMP + H(+). Uridylyltransferase (UTase) activity is inhibited by glutamine, while glutamine activates uridylyl-removing (UR) activity. Its function is as follows. Modifies, by uridylylation and deuridylylation, the PII regulatory proteins (GlnB and homologs), in response to the nitrogen status of the cell that GlnD senses through the glutamine level. Under low glutamine levels, catalyzes the conversion of the PII proteins and UTP to PII-UMP and PPi, while under higher glutamine levels, GlnD hydrolyzes PII-UMP to PII and UMP (deuridylylation). Thus, controls uridylylation state and activity of the PII proteins, and plays an important role in the regulation of nitrogen assimilation and metabolism. In Brucella suis biovar 1 (strain 1330), this protein is Bifunctional uridylyltransferase/uridylyl-removing enzyme.